We begin with the raw amino-acid sequence, 79 residues long: Acyl carrier protein (79 aa).

The 76-residue stretch at 2-77 folds into the Carrier domain; that stretch reads SEIGERVKKI…DATKFLEKNA (76 aa). An O-(pantetheine 4'-phosphoryl)serine modification is found at Ser-37.

The protein belongs to the acyl carrier protein (ACP) family. In terms of processing, 4'-phosphopantetheine is transferred from CoA to a specific serine of apo-ACP by AcpS. This modification is essential for activity because fatty acids are bound in thioester linkage to the sulfhydryl of the prosthetic group.

It localises to the cytoplasm. It functions in the pathway lipid metabolism; fatty acid biosynthesis. Carrier of the growing fatty acid chain in fatty acid biosynthesis. The sequence is that of Acyl carrier protein from Rhodopseudomonas palustris (strain HaA2).